A 222-amino-acid chain; its full sequence is Translation initiation factor 6 (222 aa).

Belongs to the eIF-6 family.

Functionally, binds to the 50S ribosomal subunit and prevents its association with the 30S ribosomal subunit to form the 70S initiation complex. This Methanothermobacter thermautotrophicus (strain ATCC 29096 / DSM 1053 / JCM 10044 / NBRC 100330 / Delta H) (Methanobacterium thermoautotrophicum) protein is Translation initiation factor 6.